The sequence spans 561 residues: Putative transport protein KPK_3686 (561 aa).

The next 5 membrane-spanning stretches (helical) occupy residues 8 to 28 (LLNG…LCLG), 37 to 57 (LGNS…HFAI), 66 to 86 (FMLF…SIFF), 94 to 114 (MLAL…GKVF), and 158 to 178 (HLSL…IVGA). 2 RCK C-terminal domains span residues 202 to 288 (LDTD…SFRN) and 292 to 373 (VFDR…RIGF). A run of 5 helical transmembrane segments spans residues 383-403 (LLAF…TFQF), 406-426 (FSFG…LGFL), 447-467 (FGLM…INNG), 478-498 (AGLI…AYVL), and 540-560 (AIAN…WPGL).

Belongs to the AAE transporter (TC 2.A.81) family. YbjL subfamily.

The protein localises to the cell membrane. This is Putative transport protein KPK_3686 from Klebsiella pneumoniae (strain 342).